Reading from the N-terminus, the 562-residue chain is Protein wntless (562 aa).

Residues 1 to 15 (MSGTILENLSGRKLS) are Cytoplasmic-facing. A helical membrane pass occupies residues 16 to 36 (ILVSSLMLCQVVCFLMGGLFA). At 37 to 239 (PVPAGHQTVL…AIHQNGGFTQ (203 aa)) the chain is on the lumenal side. N58 and N103 each carry an N-linked (GlcNAc...) asparagine glycan. Residues 240–260 (VWLVLKTLLFPFVIGIMMWFW) form a helical membrane-spanning segment. The Cytoplasmic segment spans residues 261-275 (RRVHILQRSPALLEY). The chain crosses the membrane as a helical span at residues 276–296 (MLFYLGGALSFLNLPLELLTL). Topologically, residues 297–311 (GVEMPYMLLLSDVRQ) are lumenal. Residues 312–332 (GIFYAMLLSFWLVFAGEHMLI) traverse the membrane as a helical segment. Residues 333–344 (QDSPSKSTIRSR) lie on the Cytoplasmic side of the membrane. Residues 345 to 365 (YWKHLSAVVVGCISLFVFDIC) traverse the membrane as a helical segment. Over 366–390 (ERGVQMRNPFYSIWTTPLGAKVAMS) the chain is Lumenal. Residues 391-411 (FIVLAGVSAAIYFLFLCFMVW) traverse the membrane as a helical segment. At 412–441 (KVFKDIGDKRTSLPSMSQARRLHYEGLIYR) the chain is on the cytoplasmic side. A helical transmembrane segment spans residues 442–462 (FKFLMLATLLCAGLTVAGFIM). Over 463 to 482 (GQMAEGHWKWNENIEIQLTS) the chain is Lumenal. A helical transmembrane segment spans residues 483–503 (AFLTGVYGMWNIYIFALIILY). The Cytoplasmic portion of the chain corresponds to 504 to 562 (APSHKQWPTMRHSDETTQSNENIVASAASEEIEFSNLPSDSNPSEISSLTSFTRKVAFD).

It belongs to the wntless family. Interacts with wg; in the Golgi. Interacts with Vps35, a component of the retromer complex; wls stability is regulated by Vps35.

It localises to the presynaptic cell membrane. It is found in the postsynaptic cell membrane. The protein localises to the cell membrane. Its subcellular location is the endoplasmic reticulum membrane. The protein resides in the endosome membrane. It localises to the golgi apparatus membrane. A segment polarity gene required for wingless (wg)-dependent patterning processes, acting in both wg-sending cells and wg-target cells. In non-neuronal cells wls directs wg secretion. The wls traffic loop encompasses the Golgi, the cell surface, an endocytic compartment and a retrograde route leading back to the Golgi, and involves clathrin-mediated endocytosis and the retromer complex (a conserved protein complex consisting of Vps35 and Vps26). In neuronal cells (the larval motorneuron NMJ), the wg signal moves across the synapse via the release of wls-containing exosome-like vesicles. Postsynaptic wls is required for the trafficking of fz2 through the fz2-interacting protein Grip. This is Protein wntless from Drosophila grimshawi (Hawaiian fruit fly).